Reading from the N-terminus, the 332-residue chain is 2-oxoglutarate-dependent dioxygenase ecdK (332 aa).

The 117-residue stretch at 178-294 folds into the Fe2OG dioxygenase domain; it reads HASELRLNHY…RRSVAFFLKP (117 aa). 3 residues coordinate Fe cation: H206, D208, and H266. Residue R285 coordinates 2-oxoglutarate.

Belongs to the iron/ascorbate-dependent oxidoreductase family. Requires Fe(2+) as cofactor.

The protein operates within antifungal biosynthesis. 2-oxoglutarate-dependent dioxygenase; part of the gene cluster that mediates the biosynthesis of echinocandin B, a fungal lipidated cyclic hexapeptide that acts as an antifungal agent. Linoleoyl-AMP, produced by the fatty-acyl-AMP ligase ecdI, is transferred to the initiation carrier domain (T0) of ecdA. The linoleoyl-S-phosphopantetheinyl-T0 is sequentially extended with L-ornithine, L-threonine, L-proline, L-homotyrosine, L-threonine, and 4R-methyl-L-proline to form the linear hexapeptide. Thereafter, the terminal condensation (C7) performs macrocyclization of the NRPS product and the cyclic scaffold is released from ecdA. All six of the amino acid residues are hydroxylated, including 4R,5R-dihydroxy-L-ornithine, 4R-hydroxyl-L-proline, 3S,4S-dihydroxy-L-homotyrosine, and 3S-hydroxyl-4S-methyl-L-prolin. In the pathway, all the hydroxylation reactions are proposed to occur following completion of the cyclic peptide, so the unhydroxylated precursor produced by ecdA will undergo six rounds of hydroxylation. Five hydroxylase genes (ecdG, ecdH, ecdK, htyE and htyF) are embedded within the echinocandin B (ecd) and L-homotyrosine (hty) clusters. In Aspergillus rugulosus (Emericella rugulosa), this protein is 2-oxoglutarate-dependent dioxygenase ecdK.